We begin with the raw amino-acid sequence, 1909 residues long: Receptor-type tyrosine-protein phosphatase F (1909 aa).

Positions 1–31 (MVPNTCTSVPLLPVGLPLLLLLSCIQFSSQA) are cleaved as a signal peptide. Over 32–1266 (DSLPNFVRSP…RSVDQPEMLW (1235 aa)) the chain is Extracellular. 3 Ig-like C2-type domains span residues 35–125 (PNFV…AKLT), 137–225 (PTID…ANLY), and 233–315 (PRFS…AQVS). C56 and C109 are disulfide-bonded. 68–77 (WMKKGKKVSS) provides a ligand contact to heparin. A glycan (N-linked (GlcNAc...) asparagine) is linked at N119. C158 and C208 are oxidised to a cystine. Residues N251 and N296 are each glycosylated (N-linked (GlcNAc...) asparagine). C254 and C299 form a disulfide bridge. Fibronectin type-III domains are found at residues 322 to 412 (PPTS…TGEQ), 417 to 511 (PPLH…TQQG), 515 to 604 (QPSS…TAQS), 609 to 706 (PPQD…TNED), 711 to 819 (PPRK…TTGA), 820 to 914 (VPGK…PEDV), 918 to 1013 (FPLN…TSPA), and 1014 to 1098 (FATS…TAPD). Positions 399–418 (GPPSEPVETRTGEQAPSSPP) are disordered. N-linked (GlcNAc...) asparagine glycosylation occurs at N721. N963 and N966 each carry an N-linked (GlcNAc...) asparagine glycan. Residues 1267-1287 (VMGPVLAVVLIIIIVIAILLF) form a helical membrane-spanning segment. Over 1288–1909 (KRKRASPLPK…YLGSFDHYAT (622 aa)) the chain is Cytoplasmic. Tyrosine-protein phosphatase domains follow at residues 1354-1609 (FSQE…LLEA) and 1641-1900 (MELE…ALEY). Substrate contacts are provided by residues D1518, 1550–1556 (CSAGVGR), and Q1594. C1550 serves as the catalytic Phosphocysteine intermediate. C1841 functions as the Phosphocysteine intermediate in the catalytic mechanism.

The protein belongs to the protein-tyrosine phosphatase family. Receptor class 2A subfamily.

The protein localises to the membrane. The catalysed reaction is O-phospho-L-tyrosyl-[protein] + H2O = L-tyrosyl-[protein] + phosphate. Possible cell adhesion receptor. It possesses an intrinsic protein tyrosine phosphatase activity (PTPase). Its function is as follows. The first PTPase domain has enzymatic activity, while the second one seems to affect the substrate specificity of the first one. This Danio rerio (Zebrafish) protein is Receptor-type tyrosine-protein phosphatase F (ptprf).